The primary structure comprises 115 residues: Gonadotropin subunit beta-2 (115 aa).

6 disulfide bridges follow: C6–C54, C20–C69, C23–C107, C31–C85, C35–C87, and C90–C97. N10 carries an N-linked (GlcNAc...) asparagine glycan.

Belongs to the glycoprotein hormones subunit beta family. As to quaternary structure, heterodimer of an alpha and a beta chain.

The protein resides in the secreted. Involved in gametogenesis and steroidogenesis. This chain is Gonadotropin subunit beta-2 (cgbb), found in Thunnus obesus (Bigeye tuna).